The sequence spans 207 residues: MASSGRYKVKFRRRREGKTDYYKRRIMVISGKPRLVVRFSNRYVLAQVIVSAPQGDFTVAEASSRELVKKFGWLGGTGNTPAAYLVGLLIGYRALSKGIKLAVLDVGLHRVTKGGRLFAVVKGAVDAGLEVPHDEEVQPSEDRLNGEHIAQYAADLKQSNPELYKIRFSKYLARGLEPENISKHIEEVKSKIMEKYAKSEAKAEDSQ.

This sequence belongs to the universal ribosomal protein uL18 family. Part of the 50S ribosomal subunit. Contacts the 5S and 23S rRNAs.

In terms of biological role, this is one of the proteins that bind and probably mediate the attachment of the 5S RNA into the large ribosomal subunit, where it forms part of the central protuberance. The polypeptide is Large ribosomal subunit protein uL18 (Caldivirga maquilingensis (strain ATCC 700844 / DSM 13496 / JCM 10307 / IC-167)).